We begin with the raw amino-acid sequence, 142 residues long: Large ribosomal subunit protein uL13 (142 aa).

This sequence belongs to the universal ribosomal protein uL13 family. In terms of assembly, part of the 50S ribosomal subunit.

Its function is as follows. This protein is one of the early assembly proteins of the 50S ribosomal subunit, although it is not seen to bind rRNA by itself. It is important during the early stages of 50S assembly. In Stutzerimonas stutzeri (strain A1501) (Pseudomonas stutzeri), this protein is Large ribosomal subunit protein uL13.